A 218-amino-acid polypeptide reads, in one-letter code: Imidazole glycerol phosphate synthase subunit HisH (218 aa).

Positions 5–213 constitute a Glutamine amidotransferase type-1 domain; the sequence is RLAVIDYEAG…VEFVARCSPL (209 aa). Cys83 (nucleophile) is an active-site residue. Active-site residues include His188 and Glu190.

In terms of assembly, heterodimer of HisH and HisF.

Its subcellular location is the cytoplasm. The catalysed reaction is 5-[(5-phospho-1-deoxy-D-ribulos-1-ylimino)methylamino]-1-(5-phospho-beta-D-ribosyl)imidazole-4-carboxamide + L-glutamine = D-erythro-1-(imidazol-4-yl)glycerol 3-phosphate + 5-amino-1-(5-phospho-beta-D-ribosyl)imidazole-4-carboxamide + L-glutamate + H(+). It catalyses the reaction L-glutamine + H2O = L-glutamate + NH4(+). Its pathway is amino-acid biosynthesis; L-histidine biosynthesis; L-histidine from 5-phospho-alpha-D-ribose 1-diphosphate: step 5/9. In terms of biological role, IGPS catalyzes the conversion of PRFAR and glutamine to IGP, AICAR and glutamate. The HisH subunit catalyzes the hydrolysis of glutamine to glutamate and ammonia as part of the synthesis of IGP and AICAR. The resulting ammonia molecule is channeled to the active site of HisF. The sequence is that of Imidazole glycerol phosphate synthase subunit HisH from Synechococcus sp. (strain JA-2-3B'a(2-13)) (Cyanobacteria bacterium Yellowstone B-Prime).